Consider the following 155-residue polypeptide: Ribosomal RNA large subunit methyltransferase H (155 aa).

S-adenosyl-L-methionine is bound by residues L73, G104, and 123–128 (LSPLTL).

This sequence belongs to the RNA methyltransferase RlmH family. In terms of assembly, homodimer.

It is found in the cytoplasm. The catalysed reaction is pseudouridine(1915) in 23S rRNA + S-adenosyl-L-methionine = N(3)-methylpseudouridine(1915) in 23S rRNA + S-adenosyl-L-homocysteine + H(+). In terms of biological role, specifically methylates the pseudouridine at position 1915 (m3Psi1915) in 23S rRNA. The protein is Ribosomal RNA large subunit methyltransferase H of Pseudomonas aeruginosa (strain LESB58).